Consider the following 428-residue polypeptide: Cholecystokinin receptor type A (428 aa).

At 1–41 (MDVVDSLLVNGSNITPPCELGLENETLFCLDQPRPSKEWQP) the chain is on the extracellular side. Asparagine 10 and asparagine 24 each carry an N-linked (GlcNAc...) asparagine glycan. An intrachain disulfide couples cysteine 18 to cysteine 29. Residues 42 to 67 (AVQILLYSLIFLLSVLGNTLVITVLI) traverse the membrane as a helical segment. Residues 68–77 (RNKRMRTVTN) are Cytoplasmic-facing. A helical transmembrane segment spans residues 78–104 (IFLLSLAVSDLMLCLFCMPFNLIPNLL). The Extracellular segment spans residues 105-115 (KDFIFGSAVCK). Cysteine 114 and cysteine 196 form a disulfide bridge. The chain crosses the membrane as a helical span at residues 116-137 (TTTYFMGTSVSVSTFNLVAISL). The Cytoplasmic segment spans residues 138-157 (ERYGAICKPLQSRVWQTKSH). The chain crosses the membrane as a helical span at residues 158-178 (ALKVIAATWCLSFTIMTPYPI). Over 179–210 (YSNLVPFTKNNNQTANMCRFLLPNDVMQQSWH) the chain is Extracellular. N-linked (GlcNAc...) asparagine glycosylation occurs at asparagine 190. The helical transmembrane segment at 211 to 234 (TFLLLILFLIPGIVMMVAYGLISL) threads the bilayer. Topologically, residues 235–313 (ELYQGIKFEA…NLMAKKRVIR (79 aa)) are cytoplasmic. The interval 248–272 (KSAKERKPSTTSSGKYEDSDGCYLQ) is disordered. Residues 314 to 334 (MLIVIVVLFFLCWMPIFSANA) form a helical membrane-spanning segment. Over 335-349 (WRAYDTASAERRLSG) the chain is Extracellular. A helical transmembrane segment spans residues 350-373 (TPISFILLLSYTSSCVNPIIYCFM). Residues 374 to 428 (NKRFRLGFMATFPCCPNPGPPGARGEVGEEEEGGTTGASLSRFSYSHMSASVPPQ) lie on the Cytoplasmic side of the membrane. The S-palmitoyl cysteine moiety is linked to residue cysteine 387. The interval 394-428 (PGARGEVGEEEEGGTTGASLSRFSYSHMSASVPPQ) is disordered. Residues 411-422 (ASLSRFSYSHMS) show a composition bias toward polar residues.

It belongs to the G-protein coupled receptor 1 family.

The protein localises to the cell membrane. Its function is as follows. Receptor for cholecystokinin. Mediates pancreatic growth and enzyme secretion, smooth muscle contraction of the gall bladder and stomach. Has a 1000-fold higher affinity for CCK rather than for gastrin. It modulates feeding and dopamine-induced behavior in the central and peripheral nervous system. This receptor mediates its action by association with G proteins that activate a phosphatidylinositol-calcium second messenger system. The polypeptide is Cholecystokinin receptor type A (CCKAR) (Homo sapiens (Human)).